Consider the following 852-residue polypeptide: Cytochrome P450 monooxygenase mpaDE (852 aa).

Residues 1–6 (MDYLII) lie on the Lumenal side of the membrane. Residues 7–29 (IRITAVAVVLYLTRYVCCLYLHL) form a helical membrane-spanning segment. The Cytoplasmic segment spans residues 30–852 (QDVPGPLFAK…DLEDAMEGTK (823 aa)). Cys448 provides a ligand contact to heme.

The protein belongs to the cytochrome P450 family. It depends on heme as a cofactor.

Its subcellular location is the endoplasmic reticulum membrane. It catalyses the reaction 5-methylorsellinate + reduced [NADPH--hemoprotein reductase] + O2 = 4,6-dihydroxy-2-(hydroxymethyl)-3-methylbenzoate + oxidized [NADPH--hemoprotein reductase] + H2O + H(+). The enzyme catalyses 4,6-dihydroxy-2-(hydroxymethyl)-3-methylbenzoate + H(+) = 5,7-dihydroxy-4-methylphthalide + H2O. It participates in secondary metabolite biosynthesis; terpenoid biosynthesis. Functionally, cytochrome P450 monooxygenase; part of the gene cluster that mediates the biosynthesis of mycophenolic acid (MPA), the first isolated antibiotic natural product in the world obtained from a culture of Penicillium brevicompactum in 1893. MpaDE is an endoplasmic reticulum-bound enzyme that catalyzes the conversion of 5-methylorsellinic acid (5MOA) into the phthalide compound 5,7-dihydroxy-4,6-dimethylphthalide (DHMP). MpaDE first catalyzes hydroxylation of 5-MOA to 4,6-dihydroxy-2-(hydroxymethyl)-3-methylbenzoic acid (DHMB), and then acts as a lactone synthase that catalyzes the ring closure to convert DHMB into DHMP. The first step of the pathway is the synthesis of 5-methylorsellinic acid (5MOA) by the cytosolic polyketide synthase mpaC. 5MOA is then converted to the phthalide compound 5,7-dihydroxy-4,6-dimethylphthalide (DHMP) by the endoplasmic reticulum-bound cytochrome P450 monooxygenase mpaDE. MpaDE first catalyzes hydroxylation of 5-MOA to 4,6-dihydroxy-2-(hydroxymethyl)-3-methylbenzoic acid (DHMB). MpaDE then acts as a lactone synthase that catalyzes the ring closure to convert DHMB into DHMP. The next step is the prenylation of DHMP by the Golgi apparatus-associated prenyltransferase mpaA to yield farnesyl-DHMP (FDHMP). The ER-bound oxygenase mpaB then mediates the oxidative cleavage the C19-C20 double bond in FDHMP to yield FDHMP-3C via a mycophenolic aldehyde intermediate. The O-methyltransferase mpaG catalyzes the methylation of FDHMP-3C to yield MFDHMP-3C. After the cytosolic methylation of FDHMP-3C, MFDHMP-3C enters into peroxisomes probably via free diffusion due to its low molecular weight. Upon a peroxisomal CoA ligation reaction, catalyzed by a beta-oxidation component enzyme acyl-CoA ligase ACL891, MFDHMP-3C-CoA would then be restricted to peroxisomes for the following beta-oxidation pathway steps. The peroxisomal beta-oxidation machinery than converts MFDHMP-3C-CoA into MPA_CoA, via a beta-oxidation chain-shortening process. Finally mpaH acts as a peroxisomal acyl-CoA hydrolase with high substrate specificity toward MPA-CoA to release the final product MPA. The protein is Cytochrome P450 monooxygenase mpaDE of Penicillium roqueforti (strain FM164).